The chain runs to 100 residues: Large ribosomal subunit protein eL30 (100 aa).

The protein belongs to the eukaryotic ribosomal protein eL30 family.

This chain is Large ribosomal subunit protein eL30, found in Methanococcus maripaludis (strain DSM 14266 / JCM 13030 / NBRC 101832 / S2 / LL).